We begin with the raw amino-acid sequence, 371 residues long: Bifunctional enzyme IspD/IspF (371 aa).

The tract at residues 1-210 (MSEISLIMLA…LDLPTPSFEI (210 aa)) is 2-C-methyl-D-erythritol 4-phosphate cytidylyltransferase. The segment at 211–371 (FTGNGFDVHE…NLKYFDWTRL (161 aa)) is 2-C-methyl-D-erythritol 2,4-cyclodiphosphate synthase. Positions 217 and 219 each coordinate a divalent metal cation. 4-CDP-2-C-methyl-D-erythritol 2-phosphate-binding positions include 217–219 (DVH) and 243–244 (HS). His-251 provides a ligand contact to a divalent metal cation. 4-CDP-2-C-methyl-D-erythritol 2-phosphate-binding positions include 265 to 267 (DIG), 270 to 274 (YPDTD), 341 to 344 (TTTE), Phe-348, and Arg-351.

In the N-terminal section; belongs to the IspD/TarI cytidylyltransferase family. IspD subfamily. This sequence in the C-terminal section; belongs to the IspF family. It depends on a divalent metal cation as a cofactor.

It catalyses the reaction 2-C-methyl-D-erythritol 4-phosphate + CTP + H(+) = 4-CDP-2-C-methyl-D-erythritol + diphosphate. The catalysed reaction is 4-CDP-2-C-methyl-D-erythritol 2-phosphate = 2-C-methyl-D-erythritol 2,4-cyclic diphosphate + CMP. The protein operates within isoprenoid biosynthesis; isopentenyl diphosphate biosynthesis via DXP pathway; isopentenyl diphosphate from 1-deoxy-D-xylulose 5-phosphate: step 2/6. Its pathway is isoprenoid biosynthesis; isopentenyl diphosphate biosynthesis via DXP pathway; isopentenyl diphosphate from 1-deoxy-D-xylulose 5-phosphate: step 4/6. In terms of biological role, bifunctional enzyme that catalyzes the formation of 4-diphosphocytidyl-2-C-methyl-D-erythritol from CTP and 2-C-methyl-D-erythritol 4-phosphate (MEP) (IspD), and catalyzes the conversion of 4-diphosphocytidyl-2-C-methyl-D-erythritol 2-phosphate (CDP-ME2P) to 2-C-methyl-D-erythritol 2,4-cyclodiphosphate (ME-CPP) with a corresponding release of cytidine 5-monophosphate (CMP) (IspF). The sequence is that of Bifunctional enzyme IspD/IspF from Campylobacter jejuni subsp. jejuni serotype O:23/36 (strain 81-176).